Here is a 431-residue protein sequence, read N- to C-terminus: Glucose-1-phosphate adenylyltransferase (431 aa).

Lys-39 contributes to the beta-D-fructose 1,6-bisphosphate binding site. Residues Arg-40, His-46, and Arg-52 each contribute to the AMP site. Tyr-114 contributes to the alpha-D-glucose 1-phosphate binding site. Arg-130 contributes to the AMP binding site. Alpha-D-glucose 1-phosphate contacts are provided by residues Gly-179, 194 to 195, and Ser-212; that span reads EK. AMP-binding residues include Glu-370 and Arg-386. Beta-D-fructose 1,6-bisphosphate-binding positions include 419-423 and 429-431; these read REMLR and QER.

This sequence belongs to the bacterial/plant glucose-1-phosphate adenylyltransferase family. As to quaternary structure, homotetramer.

It catalyses the reaction alpha-D-glucose 1-phosphate + ATP + H(+) = ADP-alpha-D-glucose + diphosphate. It participates in glycan biosynthesis; glycogen biosynthesis. Its activity is regulated as follows. Allosterically activated by fructose-1,6-bisphosphate (F16BP) and inhibited by AMP. Involved in the biosynthesis of ADP-glucose, a building block required for the elongation reactions to produce glycogen. Catalyzes the reaction between ATP and alpha-D-glucose 1-phosphate (G1P) to produce pyrophosphate and ADP-Glc. In Escherichia coli O45:K1 (strain S88 / ExPEC), this protein is Glucose-1-phosphate adenylyltransferase.